Here is a 792-residue protein sequence, read N- to C-terminus: Pentatricopeptide repeat-containing protein At4g30700 (792 aa).

16 PPR repeats span residues 51-81, 82-117, 118-152, 153-183, 184-218, 220-254, 255-285, 286-320, 321-352, 353-383, 384-418, 419-453, 454-484, 485-519, 520-555, and 556-586; these read DISL…VQRP, DVFL…DLKP, NSST…GCDS, ELLL…MPEK, DTIL…SCTR, DTTT…GCYS, HDYV…FRKP, DIVA…GARL, RSST…NFLS, HASV…SPEK, SLPS…EFSP, NPVT…DFES, SIYV…MTKK, NEVT…GITP, TPVT…GFEP, and SVKH…MSIE. The interval 591–666 is type E motif; the sequence is VWETLLGACR…APGYTLIEIG (76 aa). The segment at 667–697 is type E(+) motif; it reads ETPHVFTSGDQSHPQVKEIYEKLEKLEGKMR. Residues 698 to 792 form a type DYW motif region; that stretch reads EAGYQPETEL…DGVCSCGDYW (95 aa).

This sequence belongs to the PPR family. PCMP-H subfamily.

The sequence is that of Pentatricopeptide repeat-containing protein At4g30700 (DYW9) from Arabidopsis thaliana (Mouse-ear cress).